A 429-amino-acid polypeptide reads, in one-letter code: Trigger factor (429 aa).

A PPIase FKBP-type domain is found at glycine 163 to proline 248.

Belongs to the FKBP-type PPIase family. Tig subfamily.

The protein localises to the cytoplasm. It catalyses the reaction [protein]-peptidylproline (omega=180) = [protein]-peptidylproline (omega=0). Functionally, involved in protein export. Acts as a chaperone by maintaining the newly synthesized protein in an open conformation. Functions as a peptidyl-prolyl cis-trans isomerase. This is Trigger factor from Halothermothrix orenii (strain H 168 / OCM 544 / DSM 9562).